The primary structure comprises 141 residues: Large ribosomal subunit protein uL11 (141 aa).

Belongs to the universal ribosomal protein uL11 family. As to quaternary structure, part of the ribosomal stalk of the 50S ribosomal subunit. Interacts with L10 and the large rRNA to form the base of the stalk. L10 forms an elongated spine to which L12 dimers bind in a sequential fashion forming a multimeric L10(L12)X complex. One or more lysine residues are methylated.

Functionally, forms part of the ribosomal stalk which helps the ribosome interact with GTP-bound translation factors. This Syntrophomonas wolfei subsp. wolfei (strain DSM 2245B / Goettingen) protein is Large ribosomal subunit protein uL11.